The chain runs to 152 residues: Probable spermine N(1)-acetyltransferase (152 aa).

The 150-residue stretch at 3–152 (INIKAVTDDN…NGEKVMVKEL (150 aa)) folds into the N-acetyltransferase domain. Acetyl-CoA is bound by residues 82–84 (FFI), 89–95 (QGKGLGK), and 122–131 (NIHAIRLYQR). Y129 functions as the Proton donor in the catalytic mechanism.

The protein belongs to the acetyltransferase family.

It catalyses the reaction an alkane-alpha,omega-diamine + acetyl-CoA = an N-acetylalkane-alpha,omega-diamine + CoA + H(+). The catalysed reaction is spermine + acetyl-CoA = N(1)-acetylspermine + CoA + H(+). The protein operates within amine and polyamine degradation; spermine degradation. Probably acetylates spermine to N(1)-acetylspermine. The protein is Probable spermine N(1)-acetyltransferase of Bacillus subtilis subsp. natto (strain BEST195).